Here is a 284-residue protein sequence, read N- to C-terminus: Polyamine aminopropyltransferase (284 aa).

Positions 6 to 242 (KGWFTEVCKE…GWWSATLAGH (237 aa)) constitute a PABS domain. Gln36 lines the S-methyl-5'-thioadenosine pocket. Spermidine is bound by residues His67 and Asp91. S-methyl-5'-thioadenosine contacts are provided by residues Glu111 and 142–143 (DG). The active-site Proton acceptor is the Asp161. 161-164 (DSTD) contributes to the spermidine binding site.

Belongs to the spermidine/spermine synthase family. As to quaternary structure, homodimer or homotetramer.

The protein resides in the cytoplasm. The enzyme catalyses S-adenosyl 3-(methylsulfanyl)propylamine + putrescine = S-methyl-5'-thioadenosine + spermidine + H(+). It participates in amine and polyamine biosynthesis; spermidine biosynthesis; spermidine from putrescine: step 1/1. Functionally, catalyzes the irreversible transfer of a propylamine group from the amino donor S-adenosylmethioninamine (decarboxy-AdoMet) to putrescine (1,4-diaminobutane) to yield spermidine. This is Polyamine aminopropyltransferase from Nitrosococcus oceani (strain ATCC 19707 / BCRC 17464 / JCM 30415 / NCIMB 11848 / C-107).